The sequence spans 184 residues: Ribosome-recycling factor (184 aa).

The protein belongs to the RRF family.

It localises to the cytoplasm. Responsible for the release of ribosomes from messenger RNA at the termination of protein biosynthesis. May increase the efficiency of translation by recycling ribosomes from one round of translation to another. The polypeptide is Ribosome-recycling factor (Agathobacter rectalis (strain ATCC 33656 / DSM 3377 / JCM 17463 / KCTC 5835 / VPI 0990) (Eubacterium rectale)).